We begin with the raw amino-acid sequence, 256 residues long: Gluconate 5-dehydrogenase (256 aa).

15–39 (LVTGASRGIGLTLAKGLARYGAEVV) provides a ligand contact to NADP(+). A substrate-binding site is contributed by Ser147. Tyr160 serves as the catalytic Proton acceptor.

The protein belongs to the short-chain dehydrogenases/reductases (SDR) family. In terms of assembly, homodimer.

It localises to the cytoplasm. The catalysed reaction is D-gluconate + NADP(+) = 5-dehydro-D-gluconate + NADPH + H(+). Functionally, catalyzes the reversible NADP-dependent oxidation of gluconate to 5-ketogluconate. Is involved in the non-phosphorylative, ketogenic oxidation of glucose. Is almost inactive with NAD as cosubstrate. Displays high substrate specificity since D-Glucose, D-sorbitol, and D-mannitol are not oxidized by the enzyme, and 2-ketogluconate and L-sorbose are not reduced. Can accept D-fructose as a substrate, with a rate that is only 10% of the rate of 5-ketogluconate reduction. This is Gluconate 5-dehydrogenase from Gluconobacter oxydans (strain 621H) (Gluconobacter suboxydans).